Consider the following 591-residue polypeptide: Metalloendopeptidase OPG085 (591 aa).

His41 is a binding site for Zn(2+). Glu44 is an active-site residue. The Zn(2+) site is built by His45 and Glu112.

It belongs to the peptidase M44 family. Zn(2+) serves as cofactor. Undergoes proteolytic processing during the course of infection. May be cleaved into 46 kDa and 22 kDa products (Potential).

It localises to the virion. Its function is as follows. Probably involved in maturation of some viral proteins by processing them preferentially at Ala-Gly-|-Ser/Thr/Lys motifs. Does not seem to be responsible for the cleavage of major core proteins. In Homo sapiens (Human), this protein is Metalloendopeptidase OPG085 (OPG085).